The sequence spans 105 residues: NADH-quinone oxidoreductase subunit K (105 aa).

3 helical membrane-spanning segments follow: residues 7 to 27 (IGVN…MFAV), 34 to 54 (IVIL…FLTF), and 66 to 86 (FSLF…AIVI).

The protein belongs to the complex I subunit 4L family. In terms of assembly, NDH-1 is composed of 14 different subunits. Subunits NuoA, H, J, K, L, M, N constitute the membrane sector of the complex.

It is found in the cell inner membrane. The enzyme catalyses a quinone + NADH + 5 H(+)(in) = a quinol + NAD(+) + 4 H(+)(out). NDH-1 shuttles electrons from NADH, via FMN and iron-sulfur (Fe-S) centers, to quinones in the respiratory chain. The immediate electron acceptor for the enzyme in this species is believed to be a menaquinone. Couples the redox reaction to proton translocation (for every two electrons transferred, four hydrogen ions are translocated across the cytoplasmic membrane), and thus conserves the redox energy in a proton gradient. In Chlorobaculum parvum (strain DSM 263 / NCIMB 8327) (Chlorobium vibrioforme subsp. thiosulfatophilum), this protein is NADH-quinone oxidoreductase subunit K.